Here is a 528-residue protein sequence, read N- to C-terminus: Tyrosine--tRNA ligase, cytoplasmic (528 aa).

Met1 is subject to N-acetylmethionine. Gly2 bears the N-acetylglycine; in Tyrosine--tRNA ligase, cytoplasmic, N-terminally processed mark. Tyr39 lines the L-tyrosine pocket. Trans-resveratrol is bound at residue Tyr39. A 'HIGH' region motif is present at residues 44-52 (TTGKPHVAY). Tyr166, Gln170, Asp173, and Gln188 together coordinate L-tyrosine. Positions 170 and 173 each coordinate trans-resveratrol. The residue at position 197 (Lys197) is an N6-acetyllysine. Ser205 carries the post-translational modification Phosphoserine. Lys206 bears the N6-acetyllysine mark. A 'KMSKS' region motif is present at residues 222-226 (KMSSS). Positions 242–247 (KKKLKK) match the Nuclear localization signal motif. A disordered region spans residues 339 to 363 (AAYPDPSKQKPMAKGPAKNSEPEEV). The tRNA-binding domain occupies 364 to 468 (IPSRLDIRVG…AGSAPGEHVF (105 aa)). Position 386 is a phosphoserine (Ser386). Residues Lys474, Lys482, and Lys490 each carry the N6-acetyllysine modification.

The protein belongs to the class-I aminoacyl-tRNA synthetase family. As to quaternary structure, homodimer. Interacts (when binding to resveratrol) with PARP1; interaction stimulates the poly-ADP-ribosyltransferase activity of PARP1.

Its subcellular location is the cytoplasm. The protein localises to the nucleus. It carries out the reaction tRNA(Tyr) + L-tyrosine + ATP = L-tyrosyl-tRNA(Tyr) + AMP + diphosphate + H(+). Its activity is regulated as follows. Resveratrol strongly inhibits the tyrosine--tRNA ligase activity. Tyrosine--tRNA ligase that catalyzes the attachment of tyrosine to tRNA(Tyr) in a two-step reaction: tyrosine is first activated by ATP to form Tyr-AMP and then transferred to the acceptor end of tRNA(Tyr). Also acts as a positive regulator of poly-ADP-ribosylation in the nucleus, independently of its tyrosine--tRNA ligase activity. Activity is switched upon resveratrol-binding: resveratrol strongly inhibits the tyrosine--tRNA ligase activity and promotes relocalization to the nucleus, where YARS1 specifically stimulates the poly-ADP-ribosyltransferase activity of PARP1. This is Tyrosine--tRNA ligase, cytoplasmic from Homo sapiens (Human).